A 470-amino-acid polypeptide reads, in one-letter code: Ribulose bisphosphate carboxylase large chain (470 aa).

The substrate site is built by N115 and T165. The active-site Proton acceptor is the K167. K169 serves as a coordination point for substrate. Mg(2+) is bound by residues K193, D195, and E196. Residue K193 is modified to N6-carboxylysine. H286 functions as the Proton acceptor in the catalytic mechanism. R287, H319, and S371 together coordinate substrate.

It belongs to the RuBisCO large chain family. Type I subfamily. Heterohexadecamer of 8 large chains and 8 small chains. Requires Mg(2+) as cofactor.

The protein localises to the carboxysome. It carries out the reaction 2 (2R)-3-phosphoglycerate + 2 H(+) = D-ribulose 1,5-bisphosphate + CO2 + H2O. The enzyme catalyses D-ribulose 1,5-bisphosphate + O2 = 2-phosphoglycolate + (2R)-3-phosphoglycerate + 2 H(+). Its function is as follows. RuBisCO catalyzes two reactions: the carboxylation of D-ribulose 1,5-bisphosphate, the primary event in carbon dioxide fixation, as well as the oxidative fragmentation of the pentose substrate in the photorespiration process. Both reactions occur simultaneously and in competition at the same active site. The chain is Ribulose bisphosphate carboxylase large chain from Synechococcus sp. (strain CC9902).